A 1305-amino-acid polypeptide reads, in one-letter code: Nonribosomal peptide synthetase hkm11 (1305 aa).

Positions 278–672 are adenylation; it reads TYGELDRWAK…GEIEHHLRPK (395 aa). In terms of domain architecture, Carrier spans 788–864; the sequence is APTTEQEALL…SLASRMRQYN (77 aa). Residue Ser-825 is modified to O-(pantetheine 4'-phosphoryl)serine. The tract at residues 926–1166 is condensation; sequence KGQLDRHQLQ…LCLNITAVRV (241 aa).

This sequence belongs to the NRP synthetase family.

It catalyses the reaction hancockiamide D + (E)-cinnamate + ATP = hancockiamide A + AMP + diphosphate. It carries out the reaction hancockiamide H + (E)-cinnamate + ATP = hancockiamide G + AMP + diphosphate. It participates in secondary metabolite biosynthesis. Its function is as follows. Nonribosomal peptide synthetase; part of the gene cluster that mediates the biosynthesis of hancockiamides, an unusual new family of N-cinnamoylated piperazines. The NRPS hkm10 and the NmrA-like reductase hkm9 are proposed to convert two molecules of L-Phe to the intermediary piperazine called xenocockiamide A. Xenocockiamide A is then converted to hancockiamide D via a series of hydroxylations and O-methylations. The tyrosinase hkm6 may catalyze an aromatic hydroxylation, then the 2-oxoglutarate-dependent Fe(II) dioxygenase hkm4 and the FAD-dependent phenol hydroxylase hkm7 may catalyze consecutive hydroxylations to install 2 more hydroxy groups, and the methyltransferase hkm8 probably catalyzes two methylations using 2 molecules of S-adenosyl-L-methionine (SAM). The NRPS hkm11 activates and transfers trans-cinnamate supplied by the PAL hkm12 to hancockiamide D and produces hancockiamide A. NRPS Hkm11 has the flexibility to tolerate the bulky hancockiamide G as a substrate and the absence of the acetyl-transferase hkm3 opens up the opportunity for hkm11 to introduce a second N-cinnamoyl moiety. The cytochrome P450 monooxygenase hkm5 catalyzes the methylenedioxy bridge formation, converting hancockiamide A into hancockiamide G. Hkm5 can also convert hancockiamide B into hancockiamide C, and hancockiamide D into hancockiamide H. The N-acetyltransferase hkm3 finally transfers an acetyl group to 1-N of piperazine, converting hancockiamide A into hancockiamide B and hancockiamide G into hancockiamide C. This is Nonribosomal peptide synthetase hkm11 from Aspergillus hancockii.